The primary structure comprises 207 residues: Small ribosomal subunit protein uS4c (207 aa).

Positions 22-51 are disordered; the sequence is TQKNCTRDFPPGQHGPKKKGGGNQKTKESQ. Positions 97–158 constitute an S4 RNA-binding domain; it reads MRLDTIIFRL…NSQNFVKNLL (62 aa).

The protein belongs to the universal ribosomal protein uS4 family. Part of the 30S ribosomal subunit. Contacts protein S5. The interaction surface between S4 and S5 is involved in control of translational fidelity.

Its subcellular location is the plastid. It is found in the chloroplast. Its function is as follows. One of the primary rRNA binding proteins, it binds directly to 16S rRNA where it nucleates assembly of the body of the 30S subunit. In terms of biological role, with S5 and S12 plays an important role in translational accuracy. The protein is Small ribosomal subunit protein uS4c (rps4) of Chlorella vulgaris (Green alga).